We begin with the raw amino-acid sequence, 148 residues long: Large ribosomal subunit protein uL13 (148 aa).

Belongs to the universal ribosomal protein uL13 family. In terms of assembly, part of the 50S ribosomal subunit.

Its function is as follows. This protein is one of the early assembly proteins of the 50S ribosomal subunit, although it is not seen to bind rRNA by itself. It is important during the early stages of 50S assembly. In Ureaplasma parvum serovar 3 (strain ATCC 27815 / 27 / NCTC 11736), this protein is Large ribosomal subunit protein uL13.